The sequence spans 186 residues: Elongation factor P (186 aa).

This sequence belongs to the elongation factor P family.

Its subcellular location is the cytoplasm. It functions in the pathway protein biosynthesis; polypeptide chain elongation. Its function is as follows. Involved in peptide bond synthesis. Stimulates efficient translation and peptide-bond synthesis on native or reconstituted 70S ribosomes in vitro. Probably functions indirectly by altering the affinity of the ribosome for aminoacyl-tRNA, thus increasing their reactivity as acceptors for peptidyl transferase. The sequence is that of Elongation factor P from Streptococcus sanguinis (strain SK36).